The sequence spans 128 residues: Azurin (128 aa).

Residues 1-128 (AECKVTVDST…SMMKGTVTVK (128 aa)) enclose the Plastocyanin-like domain. A disulfide bond links Cys-3 and Cys-26. Residues His-46, Cys-112, His-117, and Met-121 each coordinate Cu cation.

It localises to the periplasm. Transfers electrons from cytochrome c551 to cytochrome oxidase. This Pseudomonas fluorescens biotype A protein is Azurin.